The chain runs to 493 residues: MEPSQRNTKPPSFSDSTIPVDSDGRATVFRPFSLSSPHSRAFHLAWLSLFSCFFSTFSIPPLVPVISSDLNLSASTVSAAGIASFAGSIFSRLAMGPLCDLIGPRTSSAILSFLTAPVILSASLVSSPTSFILVRFFVGFSLANFVANQYWMSSMFSGNVIGLANGVSAGWANVGAGISQLLMPLIYSTIAEFLPRAVAWRVSFVFPAIFQVTTAVLVLLYGQDTPHGNRKNSNQNKLTIPEEEEVLVVEEDERSSFVEILIGGLGNYRAWILALLYGYSYGVELTTDNVIAGYFYERFGVNLEAAGTIAASFGISNIASRPAGGMISDALGKRFGMRGRLWGLWIVQSVAGLLCVLLGRVNSLWGSILVMWVFSVFVQAASGLVFGVVPFVSTRSLGVVAGITGSGGTVGAVVTQFLLFSGDDVRKQRSISLMGLMTFVFALSVTSIYFPQWGGMCCGPSSSSEEEDISRGLLVEDEDEEGKVVSGSLRPVC.

The segment covering 1–19 (MEPSQRNTKPPSFSDSTIP) has biased composition (polar residues). Residues 1–20 (MEPSQRNTKPPSFSDSTIPV) are disordered. 12 helical membrane-spanning segments follow: residues 46-66 (WLSL…VPVI), 70-90 (LNLS…GSIF), 113-133 (FLTA…SFIL), 136-156 (FFVG…SSMF), 174-194 (VGAG…AEFL), 202-222 (VSFV…LLYG), 257-277 (FVEI…ALLY), 299-319 (FGVN…SNIA), 341-361 (LWGL…LGRV), 368-388 (ILVM…VFGV), 400-420 (VAGI…FLLF), and 431-451 (ISLM…IYFP).

Belongs to the major facilitator superfamily. Nitrate/nitrite porter (TC 2.A.1.8) family. In terms of tissue distribution, expressed in seeds, leaves and shoots. Lower expression in roots.

It localises to the vacuole membrane. Its function is as follows. Involved in high-affinity nitrate transport. Controls nitrate content in seeds. The protein is High affinity nitrate transporter 2.7 (NRT2.7) of Arabidopsis thaliana (Mouse-ear cress).